A 389-amino-acid chain; its full sequence is Chalcone synthase 3 (389 aa).

The active site involves Cys-164.

The protein belongs to the thiolase-like superfamily. Chalcone/stilbene synthases family.

The catalysed reaction is (E)-4-coumaroyl-CoA + 3 malonyl-CoA + 3 H(+) = 2',4,4',6'-tetrahydroxychalcone + 3 CO2 + 4 CoA. The protein operates within secondary metabolite biosynthesis; flavonoid biosynthesis. The primary product of this enzyme is 4,2',4',6'-tetrahydroxychalcone (also termed naringenin-chalcone or chalcone) which can under specific conditions spontaneously isomerize into naringenin. The sequence is that of Chalcone synthase 3 (CHS3) from Trifolium subterraneum (Subterranean clover).